Consider the following 336-residue polypeptide: Polyadenylate-binding protein-interacting protein 12 (336 aa).

A disordered region spans residues 14-47 (EAGGLISPSPPSSVTSQESGASSNNDHGGNGIHD). Polar residues predominate over residues 25–40 (SSVTSQESGASSNNDH). Residues 75-85 (KLNPMAKEFIP) carry the PAM2-like motif. The Bipartite nuclear localization signal signature appears at 122–134 (RRKKSFGQQGKRR). 2 consecutive RRM domains span residues 150 to 225 (RTVY…PSKT) and 247 to 323 (RTIY…PSKT).

As to quaternary structure, interacts with MPC. As to expression, expressed in roots, leaves, stems, flowers and siliques. Detected in flowers only in growing organs: gynoecium, petals, stamenal filaments, anther walls and ovules.

The protein localises to the nucleus. In terms of biological role, binds nucleotic acids in vitro. The protein is Polyadenylate-binding protein-interacting protein 12 (CID12) of Arabidopsis thaliana (Mouse-ear cress).